The following is a 378-amino-acid chain: Transaldolase 1 (378 aa).

K146 functions as the Schiff-base intermediate with substrate in the catalytic mechanism.

The protein belongs to the transaldolase family. Type 2 subfamily.

The protein resides in the cytoplasm. The catalysed reaction is D-sedoheptulose 7-phosphate + D-glyceraldehyde 3-phosphate = D-erythrose 4-phosphate + beta-D-fructose 6-phosphate. It functions in the pathway carbohydrate degradation; pentose phosphate pathway; D-glyceraldehyde 3-phosphate and beta-D-fructose 6-phosphate from D-ribose 5-phosphate and D-xylulose 5-phosphate (non-oxidative stage): step 2/3. Transaldolase is important for the balance of metabolites in the pentose-phosphate pathway. This Streptomyces avermitilis (strain ATCC 31267 / DSM 46492 / JCM 5070 / NBRC 14893 / NCIMB 12804 / NRRL 8165 / MA-4680) protein is Transaldolase 1.